The sequence spans 262 residues: Flagellar basal-body rod protein FlgG (262 aa).

This sequence belongs to the flagella basal body rod proteins family. As to quaternary structure, the basal body constitutes a major portion of the flagellar organelle and consists of four rings (L,P,S, and M) mounted on a central rod. The rod consists of about 26 subunits of FlgG in the distal portion, and FlgB, FlgC and FlgF are thought to build up the proximal portion of the rod with about 6 subunits each.

The protein resides in the bacterial flagellum basal body. In Caulobacter vibrioides (strain ATCC 19089 / CIP 103742 / CB 15) (Caulobacter crescentus), this protein is Flagellar basal-body rod protein FlgG (flgG).